The following is a 121-amino-acid chain: General odorant-binding protein 72 (121 aa).

2 disulfides stabilise this stretch: Cys-45–Cys-101 and Cys-90–Cys-110.

Belongs to the PBP/GOBP family.

It localises to the secreted. In terms of biological role, present in the aqueous fluid surrounding olfactory sensory dendrites and are thought to aid in the capture and transport of hydrophobic odorants into and through this fluid. The sequence is that of General odorant-binding protein 72 (Obp72) from Anopheles gambiae (African malaria mosquito).